The chain runs to 126 residues: Phosphoribosyl-AMP cyclohydrolase (126 aa).

Asp-76 lines the Mg(2+) pocket. Cys-77 serves as a coordination point for Zn(2+). The Mg(2+) site is built by Asp-78 and Asp-80. Cys-94 and Cys-101 together coordinate Zn(2+).

This sequence belongs to the PRA-CH family. As to quaternary structure, homodimer. Requires Mg(2+) as cofactor. Zn(2+) serves as cofactor.

The protein resides in the cytoplasm. It catalyses the reaction 1-(5-phospho-beta-D-ribosyl)-5'-AMP + H2O = 1-(5-phospho-beta-D-ribosyl)-5-[(5-phospho-beta-D-ribosylamino)methylideneamino]imidazole-4-carboxamide. Its pathway is amino-acid biosynthesis; L-histidine biosynthesis; L-histidine from 5-phospho-alpha-D-ribose 1-diphosphate: step 3/9. In terms of biological role, catalyzes the hydrolysis of the adenine ring of phosphoribosyl-AMP. This Nitratidesulfovibrio vulgaris (strain ATCC 29579 / DSM 644 / CCUG 34227 / NCIMB 8303 / VKM B-1760 / Hildenborough) (Desulfovibrio vulgaris) protein is Phosphoribosyl-AMP cyclohydrolase.